The chain runs to 716 residues: DNA ligase (716 aa).

NAD(+) is bound by residues 47 to 51 (DATYD), 96 to 97 (SL), and E130. K132 acts as the N6-AMP-lysine intermediate in catalysis. 4 residues coordinate NAD(+): R153, E190, K306, and K330. Residues C435, C438, C453, and C459 each contribute to the Zn(2+) site. Residues 638-716 (RSDSAVAGKT…EDEWLKLIEG (79 aa)) enclose the BRCT domain.

This sequence belongs to the NAD-dependent DNA ligase family. LigA subfamily. Requires Mg(2+) as cofactor. Mn(2+) serves as cofactor.

The enzyme catalyses NAD(+) + (deoxyribonucleotide)n-3'-hydroxyl + 5'-phospho-(deoxyribonucleotide)m = (deoxyribonucleotide)n+m + AMP + beta-nicotinamide D-nucleotide.. DNA ligase that catalyzes the formation of phosphodiester linkages between 5'-phosphoryl and 3'-hydroxyl groups in double-stranded DNA using NAD as a coenzyme and as the energy source for the reaction. It is essential for DNA replication and repair of damaged DNA. In Nitrobacter winogradskyi (strain ATCC 25391 / DSM 10237 / CIP 104748 / NCIMB 11846 / Nb-255), this protein is DNA ligase.